The primary structure comprises 511 residues: GMP synthase [glutamine-hydrolyzing] (511 aa).

In terms of domain architecture, Glutamine amidotransferase type-1 spans 5–195 (DILVLDFGSQ…AKYACNCESI (191 aa)). The active-site Nucleophile is C82. Residues H169 and E171 contribute to the active site. The region spanning 196-386 (WNMGSFAKTQ…LGLSKEVVYR (191 aa)) is the GMPS ATP-PPase domain. 223–229 (SGGVDSS) is an ATP binding site.

As to quaternary structure, homodimer.

It carries out the reaction XMP + L-glutamine + ATP + H2O = GMP + L-glutamate + AMP + diphosphate + 2 H(+). Its pathway is purine metabolism; GMP biosynthesis; GMP from XMP (L-Gln route): step 1/1. Its function is as follows. Catalyzes the synthesis of GMP from XMP. The sequence is that of GMP synthase [glutamine-hydrolyzing] (guaA) from Campylobacter jejuni subsp. jejuni serotype O:2 (strain ATCC 700819 / NCTC 11168).